The primary structure comprises 244 residues: Gasdermin-like protein rcd-1-2 (244 aa).

Positions 1–22 (MDNEEWFPLKQTHYPPPTIPSM) are disordered.

The protein belongs to the gasdermin family. In terms of assembly, heterooligomer; the heterooligomer with rcd-1-1 forms a ring-shaped pore complex when inserted in the membrane.

The protein resides in the cytoplasm. The protein localises to the cell membrane. In terms of biological role, gasdermin-like protein involved in heterokaryon incompatibility, a process that ensures that during spontaneous vegetative cell fusion, only compatible cells from the same colony survive (non-self-recognition). In N.crassa, the rcd-1 locus exists as 2 incompatible alleles, rcd-1-1 (AC Q7SBA0) and rcd-1-2 (this entry). During the allorecognition process, forms a heterooligomer with rcd-1-1, thereby forming a functional gasdermin-like complex that binds to membranes and forms pores, triggering cell death. Binds negatively charged phospholipids, such as cardiolipin and phosphatidylserine. Also binds to phosphoinositides, preferentially to phosphatidylinositol-3-phosphate (PtdIns-3-P), PtdIns-5-P and PtdIns-3,5-P2. The protein is Gasdermin-like protein rcd-1-2 of Neurospora crassa.